The following is a 530-amino-acid chain: Phosphoenolpyruvate carboxykinase (ATP) (530 aa).

The substrate site is built by Arg60, Tyr195, and Lys201. Residues Lys201, His221, and 237–245 (GLSGTGKTT) each bind ATP. Mn(2+) is bound by residues Lys201 and His221. Position 258 (Asp258) interacts with Mn(2+). ATP-binding residues include Glu286, Arg324, and Ser449. Arg324 is a substrate binding site.

The protein belongs to the phosphoenolpyruvate carboxykinase (ATP) family. Mn(2+) serves as cofactor.

It is found in the cytoplasm. The catalysed reaction is oxaloacetate + ATP = phosphoenolpyruvate + ADP + CO2. Its pathway is carbohydrate biosynthesis; gluconeogenesis. Functionally, involved in the gluconeogenesis. Catalyzes the conversion of oxaloacetate (OAA) to phosphoenolpyruvate (PEP) through direct phosphoryl transfer between the nucleoside triphosphate and OAA. The polypeptide is Phosphoenolpyruvate carboxykinase (ATP) (Geobacter metallireducens (strain ATCC 53774 / DSM 7210 / GS-15)).